A 165-amino-acid polypeptide reads, in one-letter code: Yapsin-5 (165 aa).

Positions 1–24 (MQLFSILSLLSSLMCSLTVLGSSA) are cleaved as a signal peptide. An N-linked (GlcNAc...) asparagine glycan is attached at Asn-57. One can recognise a Peptidase A1 domain in the interval 67–165 (YVVKMEIGTP…TRLSSMTYTY (99 aa)).

Belongs to the peptidase A1 family.

The protein is Yapsin-5 (YPS5) of Saccharomyces cerevisiae (strain ATCC 204508 / S288c) (Baker's yeast).